The following is a 362-amino-acid chain: Phospho-N-acetylmuramoyl-pentapeptide-transferase (362 aa).

Helical transmembrane passes span 28 to 48 (GATV…IALL), 73 to 93 (TPTM…LLWA), 100 to 120 (VWIV…DDYL), 134 to 154 (VKLF…VLVS), 169 to 189 (TLLI…IVGS), 201 to 221 (GLAI…VYLV), 241 to 261 (LAVF…YNAP), 264 to 284 (MVFM…AIAV), 290 to 310 (LVLA…IVQV), and 339 to 359 (TVVV…LATL).

It belongs to the glycosyltransferase 4 family. MraY subfamily. It depends on Mg(2+) as a cofactor.

It localises to the cell inner membrane. It catalyses the reaction UDP-N-acetyl-alpha-D-muramoyl-L-alanyl-gamma-D-glutamyl-meso-2,6-diaminopimeloyl-D-alanyl-D-alanine + di-trans,octa-cis-undecaprenyl phosphate = di-trans,octa-cis-undecaprenyl diphospho-N-acetyl-alpha-D-muramoyl-L-alanyl-D-glutamyl-meso-2,6-diaminopimeloyl-D-alanyl-D-alanine + UMP. Its pathway is cell wall biogenesis; peptidoglycan biosynthesis. In terms of biological role, catalyzes the initial step of the lipid cycle reactions in the biosynthesis of the cell wall peptidoglycan: transfers peptidoglycan precursor phospho-MurNAc-pentapeptide from UDP-MurNAc-pentapeptide onto the lipid carrier undecaprenyl phosphate, yielding undecaprenyl-pyrophosphoryl-MurNAc-pentapeptide, known as lipid I. The chain is Phospho-N-acetylmuramoyl-pentapeptide-transferase from Parvibaculum lavamentivorans (strain DS-1 / DSM 13023 / NCIMB 13966).